Consider the following 211-residue polypeptide: ATP phosphoribosyltransferase (211 aa).

Belongs to the ATP phosphoribosyltransferase family. Short subfamily. Heteromultimer composed of HisG and HisZ subunits.

The protein resides in the cytoplasm. It carries out the reaction 1-(5-phospho-beta-D-ribosyl)-ATP + diphosphate = 5-phospho-alpha-D-ribose 1-diphosphate + ATP. The protein operates within amino-acid biosynthesis; L-histidine biosynthesis; L-histidine from 5-phospho-alpha-D-ribose 1-diphosphate: step 1/9. Catalyzes the condensation of ATP and 5-phosphoribose 1-diphosphate to form N'-(5'-phosphoribosyl)-ATP (PR-ATP). Has a crucial role in the pathway because the rate of histidine biosynthesis seems to be controlled primarily by regulation of HisG enzymatic activity. This chain is ATP phosphoribosyltransferase, found in Bacillus cereus (strain B4264).